Consider the following 92-residue polypeptide: YcgL domain-containing protein HS_0805 (92 aa).

The 85-residue stretch at methionine 1–arginine 85 folds into the YcgL domain.

The polypeptide is YcgL domain-containing protein HS_0805 (Histophilus somni (strain 129Pt) (Haemophilus somnus)).